An 857-amino-acid polypeptide reads, in one-letter code: Protein ARG5,6, mitochondrial (857 aa).

Residues 341–492 (INRNSLRDFG…FDSSSIGSSL (152 aa)) form the N-acetyltransferase domain. The disordered stretch occupies residues 509–532 (GFHHSTVRRNTNPNPPLSEGKQTE). The active site involves Cys-669.

In the N-terminal section; belongs to the acetylglutamate kinase family. It in the C-terminal section; belongs to the NAGSA dehydrogenase family.

The protein localises to the mitochondrion. The enzyme catalyses N-acetyl-L-glutamate 5-semialdehyde + phosphate + NADP(+) = N-acetyl-L-glutamyl 5-phosphate + NADPH + H(+). It catalyses the reaction N-acetyl-L-glutamate + ATP = N-acetyl-L-glutamyl 5-phosphate + ADP. It functions in the pathway amino-acid biosynthesis; L-arginine biosynthesis; N(2)-acetyl-L-ornithine from L-glutamate: step 2/4. The protein operates within amino-acid biosynthesis; L-arginine biosynthesis; N(2)-acetyl-L-ornithine from L-glutamate: step 3/4. The chain is Protein ARG5,6, mitochondrial (ARG5,6) from Candida albicans (Yeast).